Consider the following 162-residue polypeptide: NADH-quinone oxidoreductase subunit C (162 aa).

It belongs to the complex I 30 kDa subunit family. As to quaternary structure, NDH-1 is composed of 14 different subunits. Subunits NuoB, C, D, E, F, and G constitute the peripheral sector of the complex.

The protein resides in the cell inner membrane. The catalysed reaction is a quinone + NADH + 5 H(+)(in) = a quinol + NAD(+) + 4 H(+)(out). NDH-1 shuttles electrons from NADH, via FMN and iron-sulfur (Fe-S) centers, to quinones in the respiratory chain. The immediate electron acceptor for the enzyme in this species is believed to be ubiquinone. Couples the redox reaction to proton translocation (for every two electrons transferred, four hydrogen ions are translocated across the cytoplasmic membrane), and thus conserves the redox energy in a proton gradient. The polypeptide is NADH-quinone oxidoreductase subunit C (Trichlorobacter lovleyi (strain ATCC BAA-1151 / DSM 17278 / SZ) (Geobacter lovleyi)).